A 223-amino-acid chain; its full sequence is Small ribosomal subunit protein uS3 (223 aa).

One can recognise a KH type-2 domain in the interval 39 to 108 (IRNFVKKNSY…NILINIVEVK (70 aa)).

It belongs to the universal ribosomal protein uS3 family. In terms of assembly, part of the 30S ribosomal subunit. Forms a tight complex with proteins S10 and S14.

In terms of biological role, binds the lower part of the 30S subunit head. Binds mRNA in the 70S ribosome, positioning it for translation. The polypeptide is Small ribosomal subunit protein uS3 (Clostridium botulinum (strain Hall / ATCC 3502 / NCTC 13319 / Type A)).